The sequence spans 284 residues: Nodulation protein O (284 aa).

Residues 1-27 (MNIKGSDNGSFIKGSPENDIIDGGKKN) are disordered. 5 Hemolysin-type calcium-binding repeats span residues 13 to 30 (KGSP…NDWI), 31 to 48 (DAGN…QDSI), 58 to 75 (WAGK…DDLL), 94 to 111 (HSGE…SDIL), and 112 to 129 (VAGD…GDAF). Residues Asp100, Asp109, Asp118, and Asp127 each coordinate Ca(2+). Residues 208–222 (DRGFASAAAAATAID) are export signal (aspartic acid box).

The protein resides in the secreted. Its function is as follows. The NodO protein may play a role in nodule development by direct interaction with the root hair cells or some other plant surface in a calcium-dependent manner. This chain is Nodulation protein O (nodO), found in Rhizobium leguminosarum bv. viciae.